The sequence spans 189 residues: uncharacterized protein (189 aa).

The 174-residue stretch at 1–174 folds into the Macro domain; the sequence is MKCWTLGDRV…GMEKGVREAL (174 aa).

This is an uncharacterized protein from Aeropyrum pernix (strain ATCC 700893 / DSM 11879 / JCM 9820 / NBRC 100138 / K1).